A 352-amino-acid polypeptide reads, in one-letter code: MNGTEGPNFYIPMSNITGVVRSPFEYPQYYLAEPWAYTILAAYMFTLILLGFPVNFLTLYVTIEHKKLRTPLNYILLNLAVANLFMVFGGFTTTVYTSMHGYFVFGETGCNLEGYFATLGGEISLWSLVVLAIERWVVVCKPMSNFRFGENHAIMGLAFTWIMANSCAMPPLFGWSRYIPEGMQCSCGVDYYTLKPEVNNESFVIYMFIVHFSVPLTIISFCYGRLVCTVKEAAAQQQESETTQRAEREVTRMVVIMVIAFLVCWVPYASVAWYIFTHQGSTFGPVFMTVPSFFAKSSAIYNPLIYICLNSQFRNCMITTLFCGKNPFQEEEGASTTASKTEASSVSSVSPA.

The Extracellular portion of the chain corresponds to 1–36; sequence MNGTEGPNFYIPMSNITGVVRSPFEYPQYYLAEPWA. N-linked (GlcNAc...) asparagine glycosylation is found at Asn-2 and Asn-15. A helical membrane pass occupies residues 37–61; that stretch reads YTILAAYMFTLILLGFPVNFLTLYV. At 62-73 the chain is on the cytoplasmic side; that stretch reads TIEHKKLRTPLN. Residues 74–98 traverse the membrane as a helical segment; the sequence is YILLNLAVANLFMVFGGFTTTVYTS. Residues 99 to 113 are Extracellular-facing; the sequence is MHGYFVFGETGCNLE. A disulfide bond links Cys-110 and Cys-187. The chain crosses the membrane as a helical span at residues 114-133; it reads GYFATLGGEISLWSLVVLAI. At 134–152 the chain is on the cytoplasmic side; that stretch reads ERWVVVCKPMSNFRFGENH. Residues 153–176 traverse the membrane as a helical segment; sequence AIMGLAFTWIMANSCAMPPLFGWS. The Extracellular segment spans residues 177 to 202; sequence RYIPEGMQCSCGVDYYTLKPEVNNES. N-linked (GlcNAc...) asparagine glycosylation occurs at Asn-200. The helical transmembrane segment at 203–230 threads the bilayer; that stretch reads FVIYMFIVHFSVPLTIISFCYGRLVCTV. At 231 to 252 the chain is on the cytoplasmic side; that stretch reads KEAAAQQQESETTQRAEREVTR. Residues 253–276 traverse the membrane as a helical segment; the sequence is MVVIMVIAFLVCWVPYASVAWYIF. Over 277-284 the chain is Extracellular; it reads THQGSTFG. Residues 285-309 traverse the membrane as a helical segment; sequence PVFMTVPSFFAKSSAIYNPLIYICL. Position 296 is an N6-(retinylidene)lysine (Lys-296). Topologically, residues 310 to 352 are cytoplasmic; the sequence is NSQFRNCMITTLFCGKNPFQEEEGASTTASKTEASSVSSVSPA. A lipid anchor (S-palmitoyl cysteine) is attached at Cys-323. The disordered stretch occupies residues 333–352; it reads GASTTASKTEASSVSSVSPA. The span at 334–352 shows a compositional bias: low complexity; that stretch reads ASTTASKTEASSVSSVSPA.

It belongs to the G-protein coupled receptor 1 family. Opsin subfamily. Post-translationally, phosphorylated on some or all of the serine and threonine residues present in the C-terminal region. Rod shaped photoreceptor cells which mediates vision in dim light.

The protein localises to the membrane. Its function is as follows. Visual pigments such as rhodopsin and porphyropsin are light-absorbing molecules that mediate vision. Rhodopsin consists of an apoprotein, opsin, covalently linked to 11-cis-retinal. This receptor is coupled to the activation of phospholipase C. Porphyropsin consists of opsin covalently linked to 11-cis 3,4-didehydroretinal. This chain is Rhodopsin, deep-sea form, found in Anguilla anguilla (European freshwater eel).